Here is a 177-residue protein sequence, read N- to C-terminus: uncharacterized protein (177 aa).

4 consecutive transmembrane segments (helical) span residues 20–42 (NLVS…LLAL), 62–84 (VVLW…VSLS), 94–116 (AMSS…GYFI), and 136–158 (GLLY…IIVA).

The protein localises to the cell membrane. This is an uncharacterized protein from Methanocaldococcus jannaschii (strain ATCC 43067 / DSM 2661 / JAL-1 / JCM 10045 / NBRC 100440) (Methanococcus jannaschii).